The primary structure comprises 434 residues: UDP-glucose 6-dehydrogenase (434 aa).

NAD(+) is bound by residues 2 to 19, Val11, Asp30, Lys35, Thr121, and Glu152; that span reads NITF…GIIM. Substrate is bound by residues 148–152, Lys204, Asn208, 249–253, and Gly257; these read EFLRE and FLNAG. The active-site Nucleophile is the Cys260. Lys263 is a binding site for NAD(+). Residue Lys321 coordinates substrate. Residue Arg328 coordinates NAD(+).

It belongs to the UDP-glucose/GDP-mannose dehydrogenase family.

It catalyses the reaction UDP-alpha-D-glucose + 2 NAD(+) + H2O = UDP-alpha-D-glucuronate + 2 NADH + 3 H(+). The protein operates within nucleotide-sugar biosynthesis; UDP-alpha-D-glucuronate biosynthesis; UDP-alpha-D-glucuronate from UDP-alpha-D-glucose: step 1/1. This chain is UDP-glucose 6-dehydrogenase (udg), found in Rickettsia typhi (strain ATCC VR-144 / Wilmington).